The primary structure comprises 423 residues: UPF0229 protein Pput_0430 (423 aa).

The interval glutamate 81–glutamate 108 is disordered. Residues glutamine 92 to glycine 107 show a composition bias toward gly residues.

This sequence belongs to the UPF0229 family.

The chain is UPF0229 protein Pput_0430 from Pseudomonas putida (strain ATCC 700007 / DSM 6899 / JCM 31910 / BCRC 17059 / LMG 24140 / F1).